The chain runs to 227 residues: Cytochrome c oxidase subunit 2 (227 aa).

Over 1–14 the chain is Mitochondrial intermembrane; it reads MAHPVQLGLQDATS. A helical transmembrane segment spans residues 15–45; the sequence is PVMEELITFHDYALMTISLISFLVLYALFST. Residues 46–59 are Mitochondrial matrix-facing; the sequence is LTTKLTNTNITDAQ. The helical transmembrane segment at 60–87 threads the bilayer; it reads EMETTWTILPAVILILIALPSLRILYLT. Over 88–227 the chain is Mitochondrial intermembrane; it reads DEINNPSFTI…IFEMGPVFTL (140 aa). Cu cation is bound by residues His-161, Cys-196, Glu-198, Cys-200, His-204, and Met-207. Glu-198 is a Mg(2+) binding site.

It belongs to the cytochrome c oxidase subunit 2 family. Component of the cytochrome c oxidase (complex IV, CIV), a multisubunit enzyme composed of 14 subunits. The complex is composed of a catalytic core of 3 subunits MT-CO1, MT-CO2 and MT-CO3, encoded in the mitochondrial DNA, and 11 supernumerary subunits COX4I, COX5A, COX5B, COX6A, COX6B, COX6C, COX7A, COX7B, COX7C, COX8 and NDUFA4, which are encoded in the nuclear genome. The complex exists as a monomer or a dimer and forms supercomplexes (SCs) in the inner mitochondrial membrane with NADH-ubiquinone oxidoreductase (complex I, CI) and ubiquinol-cytochrome c oxidoreductase (cytochrome b-c1 complex, complex III, CIII), resulting in different assemblies (supercomplex SCI(1)III(2)IV(1) and megacomplex MCI(2)III(2)IV(2)). Found in a complex with TMEM177, COA6, COX18, COX20, SCO1 and SCO2. Interacts with TMEM177 in a COX20-dependent manner. Interacts with COX20. Interacts with COX16. It depends on Cu cation as a cofactor.

The protein resides in the mitochondrion inner membrane. It carries out the reaction 4 Fe(II)-[cytochrome c] + O2 + 8 H(+)(in) = 4 Fe(III)-[cytochrome c] + 2 H2O + 4 H(+)(out). Component of the cytochrome c oxidase, the last enzyme in the mitochondrial electron transport chain which drives oxidative phosphorylation. The respiratory chain contains 3 multisubunit complexes succinate dehydrogenase (complex II, CII), ubiquinol-cytochrome c oxidoreductase (cytochrome b-c1 complex, complex III, CIII) and cytochrome c oxidase (complex IV, CIV), that cooperate to transfer electrons derived from NADH and succinate to molecular oxygen, creating an electrochemical gradient over the inner membrane that drives transmembrane transport and the ATP synthase. Cytochrome c oxidase is the component of the respiratory chain that catalyzes the reduction of oxygen to water. Electrons originating from reduced cytochrome c in the intermembrane space (IMS) are transferred via the dinuclear copper A center (CU(A)) of subunit 2 and heme A of subunit 1 to the active site in subunit 1, a binuclear center (BNC) formed by heme A3 and copper B (CU(B)). The BNC reduces molecular oxygen to 2 water molecules using 4 electrons from cytochrome c in the IMS and 4 protons from the mitochondrial matrix. This Chlorocebus aethiops (Green monkey) protein is Cytochrome c oxidase subunit 2 (MT-CO2).